A 406-amino-acid polypeptide reads, in one-letter code: Calreticulin (406 aa).

The N-terminal stretch at 1-17 (MMWCKTVIVLLATVGFI) is a signal peptide. A disulfide bridge connects residues Cys-105 and Cys-137. Positions 109, 111, 128, and 135 each coordinate an alpha-D-glucoside. 7 repeat units span residues 191–202 (VESGNLEDDWDF), 210–221 (DPTATKPEDWDD), 227–238 (DPDDKKPEDWDK), 244–255 (DPDATKPEDWDD), 259–269 (GEWEPPMIDNP), 273–283 (GEWQPKQLDNP), and 287–297 (GAWEHPEIANP). Residues 191-255 (VESGNLEDDW…DATKPEDWDD (65 aa)) form a 4 X approximate repeats region. Positions 207–251 (KIKDPTATKPEDWDDRATIPDPDDKKPEDWDKPEHIPDPDATKPE) are enriched in basic and acidic residues. Residues 207-259 (KIKDPTATKPEDWDDRATIPDPDDKKPEDWDKPEHIPDPDATKPEDWDDEMDG) are disordered. Residues 259 to 297 (GEWEPPMIDNPEFKGEWQPKQLDNPNYKGAWEHPEIANP) form a 3 X approximate repeats region. Residue Asp-317 participates in an alpha-D-glucoside binding. Residues 347 to 406 (KNTQAGEKKMKEAQDEVQRKKDEEEAKKASDKDDEDEDDDDEEKDDESKQDKDQSEHDEL) are disordered. A compositionally biased stretch (basic and acidic residues) spans 352 to 377 (GEKKMKEAQDEVQRKKDEEEAKKASD). A compositionally biased stretch (acidic residues) spans 378–391 (KDDEDEDDDDEEKD). A compositionally biased stretch (basic and acidic residues) spans 392-406 (DESKQDKDQSEHDEL).

Belongs to the calreticulin family.

It is found in the endoplasmic reticulum lumen. In terms of biological role, molecular calcium-binding chaperone promoting folding, oligomeric assembly and quality control in the ER via the calreticulin/calnexin cycle. This lectin may interact transiently with almost all of the monoglucosylated glycoproteins that are synthesized in the ER. The protein is Calreticulin of Drosophila melanogaster (Fruit fly).